Reading from the N-terminus, the 440-residue chain is Protein CapE (440 aa).

The next 12 membrane-spanning stretches (helical) occupy residues Val-7 to Leu-27, Ile-31 to Leu-51, Leu-60 to Leu-80, Phe-102 to Phe-122, Phe-141 to Ile-161, Glu-179 to Ser-199, Thr-204 to Gly-224, Trp-249 to Phe-269, Ile-324 to Phe-344, Tyr-360 to Trp-380, Phe-382 to Ile-402, and Phe-409 to Ile-429.

Its subcellular location is the cell membrane. Its pathway is capsule biogenesis; capsule polysaccharide biosynthesis. Its function is as follows. Required for the biosynthesis of type 1 capsular polysaccharide. The chain is Protein CapE (capE) from Staphylococcus aureus.